We begin with the raw amino-acid sequence, 208 residues long: Regulator of G-protein signaling 4 (208 aa).

Residues C2, C12, and C95 are each lipidated (S-palmitoyl cysteine). The 117-residue stretch at 62-178 (SLENLIHHDR…LKSPYLDLVS (117 aa)) folds into the RGS domain.

In terms of processing, palmitoylated on Cys-2 and/or Cys-12. Post-translationally, phosphorylated by cyclic GMP-dependent protein kinase. In terms of tissue distribution, expressed in the developing nervous system.

Its function is as follows. Inhibits signal transduction by increasing the GTPase activity of G protein alpha subunits thereby driving them into their inactive GDP-bound form. Activity on G(z)-alpha is inhibited by phosphorylation of the G-protein. Activity on G(z)-alpha and G(i)-alpha-1 is inhibited by palmitoylation of the G-protein. The polypeptide is Regulator of G-protein signaling 4 (RGS4) (Gallus gallus (Chicken)).